Here is a 493-residue protein sequence, read N- to C-terminus: Trans-aconitate decarboxylase 1 (493 aa).

The segment at 1 to 22 (MAPALNANPTTKRDELSAPSAS) is disordered.

It belongs to the class-II fumarase/aspartase family.

Its subcellular location is the cytoplasm. The protein localises to the cytosol. The protein resides in the nucleus. It catalyses the reaction trans-aconitate + H(+) = itaconate + CO2. It functions in the pathway secondary metabolite biosynthesis. Its function is as follows. Trans-aconitate decarboxylase; part of the gene cluster that mediates the biosynthesis of itaconic acid and 2-hydroxyparaconate. Cis-aconitate is secreted by the mitochondrial tricarboxylate transporter MTT1. In the cytosol cis-aconitate is converted into trans-aconitate via isomerization by the aconitate-delta-isomerase ADI1. Decarboxylation of trans-aconitate by the trans-aconitate decarboxylase TAD1 then leads then to the production of itaconic acid. The cytochrome P450 monooxygenase CYP3 further converts itaconate to 2-hydroxyparaconate via oxidation of the double bond, leading to a transient epoxide, which can subsequently be lactonized to produce 2-hydroxyparaconate. Secretion of itaconate and possibly 2-hydroxyparaconate into the medium is mediated by the major facilitator ITP1. The glyoxalase domain-containing protein RDO1 is not involved in the biosynthesis of itaconate and 2-hydroxyparaconate, however, it might play a role in the further conversion of 2-hydroxyparaconate to itatartarate. This chain is Trans-aconitate decarboxylase 1, found in Mycosarcoma maydis (Corn smut fungus).